Consider the following 244-residue polypeptide: 1-(5-phosphoribosyl)-5-[(5-phosphoribosylamino)methylideneamino] imidazole-4-carboxamide isomerase (244 aa).

Asp-8 acts as the Proton acceptor in catalysis. Asp-129 (proton donor) is an active-site residue.

The protein belongs to the HisA/HisF family.

The protein localises to the cytoplasm. It catalyses the reaction 1-(5-phospho-beta-D-ribosyl)-5-[(5-phospho-beta-D-ribosylamino)methylideneamino]imidazole-4-carboxamide = 5-[(5-phospho-1-deoxy-D-ribulos-1-ylimino)methylamino]-1-(5-phospho-beta-D-ribosyl)imidazole-4-carboxamide. It functions in the pathway amino-acid biosynthesis; L-histidine biosynthesis; L-histidine from 5-phospho-alpha-D-ribose 1-diphosphate: step 4/9. The sequence is that of 1-(5-phosphoribosyl)-5-[(5-phosphoribosylamino)methylideneamino] imidazole-4-carboxamide isomerase from Maricaulis maris (strain MCS10) (Caulobacter maris).